A 282-amino-acid polypeptide reads, in one-letter code: Heterogeneous nuclear ribonucleoprotein C (282 aa).

Residues 17 to 88 (SRVFIGNLNT…QVLDINLAAE (72 aa)) form the RRM domain. Disordered stretches follow at residues 131–177 (APPP…RLKG) and 208–282 (QSKQ…EEDS). A Nuclear localization signal motif is present at residues 141–147 (PSKRQRV). Residues 161–172 (SKSGQRGGSSKS) show a composition bias toward low complexity. The stretch at 177–217 (GDDLQAIKKELSQIKQRVDSLLENLERIERDQSKQDTKLDD) forms a coiled coil. Composition is skewed to basic and acidic residues over residues 208–217 (QSKQDTKLDD) and 224–235 (LKKEETGVKLIE). 2 stretches are compositionally biased toward acidic residues: residues 236–257 (ETGD…EDTL) and 265–282 (KETE…EEDS).

It belongs to the RRM HNRPC family. RALY subfamily. As to quaternary structure, tetramer.

It localises to the nucleus. Functionally, binds pre-mRNA and nucleates the assembly of 40S hnRNP particles. Interacts with poly-U tracts in the 3'-UTR or 5'-UTR of mRNA and modulates the stability and the level of translation of bound mRNA molecules. Single HNRNPC tetramers bind 230-240 nucleotides. Trimers of HNRNPC tetramers bind 700 nucleotides. May play a role in the early steps of spliceosome assembly and pre-mRNA splicing. N6-methyladenosine (m6A) has been shown to alter the local structure in mRNAs and long non-coding RNAs (lncRNAs) via a mechanism named 'm(6)A-switch', facilitating binding of HNRNPC, leading to regulation of mRNA splicing. The polypeptide is Heterogeneous nuclear ribonucleoprotein C (hnrnpc) (Xenopus laevis (African clawed frog)).